A 404-amino-acid polypeptide reads, in one-letter code: Probable tRNA sulfurtransferase (404 aa).

The region spanning 60–165 (QPIVEALKLV…DEAAYISYEE (106 aa)) is the THUMP domain. Residues 183-184 (ML), 208-209 (HF), Arg-265, Gly-287, and Gln-296 each bind ATP.

Belongs to the ThiI family.

The protein resides in the cytoplasm. The catalysed reaction is [ThiI sulfur-carrier protein]-S-sulfanyl-L-cysteine + a uridine in tRNA + 2 reduced [2Fe-2S]-[ferredoxin] + ATP + H(+) = [ThiI sulfur-carrier protein]-L-cysteine + a 4-thiouridine in tRNA + 2 oxidized [2Fe-2S]-[ferredoxin] + AMP + diphosphate. The enzyme catalyses [ThiS sulfur-carrier protein]-C-terminal Gly-Gly-AMP + S-sulfanyl-L-cysteinyl-[cysteine desulfurase] + AH2 = [ThiS sulfur-carrier protein]-C-terminal-Gly-aminoethanethioate + L-cysteinyl-[cysteine desulfurase] + A + AMP + 2 H(+). Its pathway is cofactor biosynthesis; thiamine diphosphate biosynthesis. Functionally, catalyzes the ATP-dependent transfer of a sulfur to tRNA to produce 4-thiouridine in position 8 of tRNAs, which functions as a near-UV photosensor. Also catalyzes the transfer of sulfur to the sulfur carrier protein ThiS, forming ThiS-thiocarboxylate. This is a step in the synthesis of thiazole, in the thiamine biosynthesis pathway. The sulfur is donated as persulfide by IscS. The chain is Probable tRNA sulfurtransferase from Streptococcus pyogenes serotype M49 (strain NZ131).